Here is a 693-residue protein sequence, read N- to C-terminus: Protein VP3 (693 aa).

The tract at residues 187-255 (FMRLLRMRFA…VISELKGLGS (69 aa)) is N7-methyltransferase activity. Positions 256–432 (YSEKKISEFG…KRQKIKVTKS (177 aa)) are 2'-O-methyltransferase activity. Residues 433–559 (LMYNAINTIY…NHIYIIPNAR (127 aa)) form an N7-methyltransferase activity region. Positions 560-693 (DENNFDTFGS…KMMEIWEVQV (134 aa)) are GTase/RTPase activity.

The protein belongs to the rotavirus VP3 family. As to quaternary structure, interacts with VP1. Interacts with VP2.

The protein resides in the virion. The enzyme catalyses a 5'-end diphospho-ribonucleoside in mRNA + GTP + H(+) = a 5'-end (5'-triphosphoguanosine)-ribonucleoside in mRNA + diphosphate. It carries out the reaction a 5'-end (5'-triphosphoguanosine)-ribonucleoside in mRNA + S-adenosyl-L-methionine = a 5'-end (N(7)-methyl 5'-triphosphoguanosine)-ribonucleoside in mRNA + S-adenosyl-L-homocysteine. Its function is as follows. Multifunctional enzyme involved in mRNA capping. Catalyzes the formation of the 5' cap structure on the viral plus-strand transcripts. Specifically binds to GTP and displays guanylyltransferase and methyltransferase activities. Has affinity for ssRNA but not for dsRNA. Capping activity is non-specific and caps RNAs that initiate with either a G or an A residue. Together with VP1 polymerase, forms a VP1-VP3 complex positioned near the channels situated at each of the five-fold vertices of the core. Following infection, the outermost layer of the virus is lost, leaving a double-layered particle (DLP) made up of the core and VP6 shell. VP1 then catalyzes the transcription of fully conservative plus-strand genomic RNAs that are capped by VP3 and extruded through the DLP's channels into the cytoplasm where they function as mRNAs for translation of viral proteins. DLPs probably have an RNA triphosphatase activity as well, whereas open cores do not. This Homo sapiens (Human) protein is Protein VP3.